The sequence spans 437 residues: Serine hydroxymethyltransferase 1 (437 aa).

(6S)-5,6,7,8-tetrahydrofolate-binding positions include Leu132 and Gly136–Leu138. Position 241 is an N6-(pyridoxal phosphate)lysine (Lys241).

This sequence belongs to the SHMT family. Homodimer. Pyridoxal 5'-phosphate is required as a cofactor.

It is found in the cytoplasm. It catalyses the reaction (6R)-5,10-methylene-5,6,7,8-tetrahydrofolate + glycine + H2O = (6S)-5,6,7,8-tetrahydrofolate + L-serine. Its pathway is one-carbon metabolism; tetrahydrofolate interconversion. It functions in the pathway amino-acid biosynthesis; glycine biosynthesis; glycine from L-serine: step 1/1. Functionally, catalyzes the reversible interconversion of serine and glycine with tetrahydrofolate (THF) serving as the one-carbon carrier. This reaction serves as the major source of one-carbon groups required for the biosynthesis of purines, thymidylate, methionine, and other important biomolecules. Also exhibits THF-independent aldolase activity toward beta-hydroxyamino acids, producing glycine and aldehydes, via a retro-aldol mechanism. The chain is Serine hydroxymethyltransferase 1 from Mesorhizobium japonicum (strain LMG 29417 / CECT 9101 / MAFF 303099) (Mesorhizobium loti (strain MAFF 303099)).